A 263-amino-acid polypeptide reads, in one-letter code: UPF0739 protein C1orf74 homolog (263 aa).

The protein belongs to the UPF0739 family.

The chain is UPF0739 protein C1orf74 homolog from Bos taurus (Bovine).